The sequence spans 179 residues: MSLKKRYRETIQPKLQKDLSLTNIHEVPKVVKVTVNRGLGEAAANAKSLEASVNELAQITGQKVVVTRAKKAIAAFKIRQGMPIGCAVTLRGDRMYAFLERLINLALPRIRDFRGVSPKSFDGRGNYTLGVREQIIFPEISFDKIDAIRGMDITIVTTARSDEEGRALLREMGMPFQSN.

Belongs to the universal ribosomal protein uL5 family. In terms of assembly, part of the 50S ribosomal subunit; part of the 5S rRNA/L5/L18/L25 subcomplex. Contacts the 5S rRNA and the P site tRNA. Forms a bridge to the 30S subunit in the 70S ribosome.

Functionally, this is one of the proteins that bind and probably mediate the attachment of the 5S RNA into the large ribosomal subunit, where it forms part of the central protuberance. In the 70S ribosome it contacts protein S13 of the 30S subunit (bridge B1b), connecting the 2 subunits; this bridge is implicated in subunit movement. Contacts the P site tRNA; the 5S rRNA and some of its associated proteins might help stabilize positioning of ribosome-bound tRNAs. This chain is Large ribosomal subunit protein uL5, found in Parasynechococcus marenigrum (strain WH8102).